The sequence spans 159 residues: Probable minor fimbrial protein (159 aa).

Residues 1 to 6 constitute a propeptide, leader sequence; that stretch reads MKKMHG. F7 carries the post-translational modification N-methylphenylalanine. A helical membrane pass occupies residues 7-27; it reads FTLIELMIVVAIIGVLASTAL. 2 disulfides stabilise this stretch: C56-C71 and C140-C153.

It belongs to the N-Me-Phe pilin family. In terms of assembly, the pili are polar flexible filaments of about 5.4 nanometers diameter and 2.5 micrometers average length; they consist of only a single polypeptide chain arranged in a helical configuration of five subunits per turn in the assembled pilus.

It localises to the fimbrium. The protein resides in the membrane. The polypeptide is Probable minor fimbrial protein (fimZ) (Dichelobacter nodosus (Bacteroides nodosus)).